A 429-amino-acid polypeptide reads, in one-letter code: Glutamate-1-semialdehyde 2,1-aminomutase (429 aa).

Lys-265 bears the N6-(pyridoxal phosphate)lysine mark.

Belongs to the class-III pyridoxal-phosphate-dependent aminotransferase family. HemL subfamily. As to quaternary structure, homodimer. Pyridoxal 5'-phosphate serves as cofactor.

The protein resides in the cytoplasm. The enzyme catalyses (S)-4-amino-5-oxopentanoate = 5-aminolevulinate. The protein operates within porphyrin-containing compound metabolism; protoporphyrin-IX biosynthesis; 5-aminolevulinate from L-glutamyl-tRNA(Glu): step 2/2. The protein is Glutamate-1-semialdehyde 2,1-aminomutase of Shewanella pealeana (strain ATCC 700345 / ANG-SQ1).